Reading from the N-terminus, the 130-residue chain is MHEMGIALQIAEIAKSAIPKTPADLKVKAVNLRVGKLTAIVPDSLRFCFEIVAKDTPLAEAELNIEEIPIVAVCKECYTETIITDADFSCEKCKSGKLDIISGRELTVSSIEVADPEEMKQAQKKSKKEK.

His-2 contributes to the Ni(2+) binding site. Zn(2+) is bound by residues Cys-74, Cys-77, Cys-90, and Cys-93.

This sequence belongs to the HypA/HybF family.

Functionally, involved in the maturation of [NiFe] hydrogenases. Required for nickel insertion into the metal center of the hydrogenase. The chain is Hydrogenase maturation factor HypA from Desulfatibacillum aliphaticivorans.